The following is a 152-amino-acid chain: UPF0756 membrane protein CA_C0092 (152 aa).

4 helical membrane passes run 5–25, 50–70, 82–102, and 117–137; these read IILV…VAIS, MFWG…QGNV, FVGI…GVGL, and LILG…GPLI.

It belongs to the UPF0756 family.

Its subcellular location is the cell membrane. The sequence is that of UPF0756 membrane protein CA_C0092 from Clostridium acetobutylicum (strain ATCC 824 / DSM 792 / JCM 1419 / IAM 19013 / LMG 5710 / NBRC 13948 / NRRL B-527 / VKM B-1787 / 2291 / W).